Here is a 49-residue protein sequence, read N- to C-terminus: Osteocalcin (49 aa).

In terms of domain architecture, Gla spans 1-47 (YLDPGLGAPAPYPDPLEPKREVCELNPDCDELADHIGFQEAYRRFYG). Pro-9 bears the Hydroxyproline mark. Ca(2+) is bound by residues Glu-17, Glu-21, Glu-24, and Asp-30. 4-carboxyglutamate is present on residues Glu-17, Glu-21, and Glu-24. Cys-23 and Cys-29 are joined by a disulfide.

The protein belongs to the osteocalcin/matrix Gla protein family. Post-translationally, gamma-carboxyglutamate residues are formed by vitamin K dependent carboxylation by GGCX. These residues are essential for the binding of calcium. Decarboxylation promotes the hormone activity.

The protein localises to the secreted. Its function is as follows. The carboxylated form is one of the main organic components of the bone matrix, which constitutes 1-2% of the total bone protein. It acts as a negative regulator of bone formation and is required to limit bone formation without impairing bone resorption or mineralization. The carboxylated form binds strongly to apatite and calcium. The uncarboxylated form acts as a hormone secreted by osteoblasts, which regulates different cellular processes, such as energy metabolism, male fertility and brain development. Regulates of energy metabolism by acting as a hormone favoring pancreatic beta-cell proliferation, insulin secretion and sensitivity and energy expenditure. Uncarboxylated osteocalcin hormone also promotes testosterone production in the testes: acts as a ligand for G protein-coupled receptor GPRC6A at the surface of Leydig cells, initiating a signaling response that promotes the expression of enzymes required for testosterone synthesis in a CREB-dependent manner. Also acts as a regulator of brain development: osteocalcin hormone crosses the blood-brain barrier and acts as a ligand for GPR158 on neurons, initiating a signaling response that prevents neuronal apoptosis in the hippocampus, favors the synthesis of all monoamine neurotransmitters and inhibits that of gamma-aminobutyric acid (GABA). Osteocalcin also crosses the placenta during pregnancy and maternal osteocalcin is required for fetal brain development. This is Osteocalcin (BGLAP) from Capra hircus (Goat).